The chain runs to 214 residues: MSISTVDDLSFYSNVEPNQQRFTEVVKTFQTNFPGDDITFFARSPGRVNLIGDHIDYNFFPVLPMAIANDVIAAVNVNSTNEIIITNTDSKDFLKEVIALRNSQIDQEHHSWANYFKCALIVAKQYLEERGVTSLKGMKLTFNGNVPTGGGLSSSAAFCVASTLAIIRANGITDLTKQDLTRITVVSEHYVGVNTGGMDQCASVCGEPDKLLLI.

Positions 47, 53, 54, and 56 each coordinate alpha-D-galactose. Residues Gly149, Gly151, Ser153, and Ser154 each contribute to the ATP site. Asp199 is an alpha-D-galactose binding site. Asp199 acts as the Proton acceptor in catalysis.

This sequence belongs to the GHMP kinase family. GalK subfamily.

It catalyses the reaction alpha-D-galactose + ATP = alpha-D-galactose 1-phosphate + ADP + H(+). The protein operates within carbohydrate metabolism; galactose metabolism. Its function is as follows. Galactokinase is a key enzyme in the galactose metabolism where it catalyzes the conversion of alpha-D-galactose to galactose 1-phosphate. Can also induce the transcription of the gal genes in response to the organism being challenged with galactose as the sole source of carbon. This is Galactokinase from Candida maltosa (Yeast).